The sequence spans 243 residues: UPF0758 protein Tery_2667 (243 aa).

Residues 113–235 (VVESPQAAAD…HSSLRQITNL (123 aa)) form the MPN domain. Zn(2+)-binding residues include H184, H186, and D197. Positions 184-197 (HNHPSGNVEPSPED) match the JAMM motif motif.

This sequence belongs to the UPF0758 family.

In Trichodesmium erythraeum (strain IMS101), this protein is UPF0758 protein Tery_2667.